The primary structure comprises 56 residues: uncharacterized protein (56 aa).

This is an uncharacterized protein from Homo sapiens (Human).